Here is a 328-residue protein sequence, read N- to C-terminus: V-type sodium ATPase subunit C (328 aa).

Belongs to the V-ATPase V0D/AC39 subunit family.

Functionally, involved in ATP-driven sodium extrusion. This is V-type sodium ATPase subunit C (ntpC) from Enterococcus hirae (strain ATCC 9790 / DSM 20160 / JCM 8729 / LMG 6399 / NBRC 3181 / NCIMB 6459 / NCDO 1258 / NCTC 12367 / WDCM 00089 / R).